Reading from the N-terminus, the 113-residue chain is Ferredoxin-1 (113 aa).

4Fe-4S ferredoxin-type domains lie at 2 to 30 (TYIVTDACVRCKFMDCVEVCPVDCFYEGE) and 31 to 60 (NFLVINPDECIDCGVCEPECPVDAIKPDTE). [3Fe-4S] cluster is bound by residues cysteine 9 and cysteine 17. [4Fe-4S] cluster-binding residues include cysteine 21, cysteine 40, cysteine 43, and cysteine 46. Cysteine 50 provides a ligand contact to [3Fe-4S] cluster.

It depends on [4Fe-4S] cluster as a cofactor. The cofactor is [3Fe-4S] cluster.

This is Ferredoxin-1 (fdxA) from Caulobacter vibrioides (strain ATCC 19089 / CIP 103742 / CB 15) (Caulobacter crescentus).